We begin with the raw amino-acid sequence, 293 residues long: Elongation factor Ts (293 aa).

Residues 79–82 (TDFV) form an involved in Mg(2+) ion dislocation from EF-Tu region.

It belongs to the EF-Ts family.

It localises to the cytoplasm. Associates with the EF-Tu.GDP complex and induces the exchange of GDP to GTP. It remains bound to the aminoacyl-tRNA.EF-Tu.GTP complex up to the GTP hydrolysis stage on the ribosome. This is Elongation factor Ts from Bacillus velezensis (strain DSM 23117 / BGSC 10A6 / LMG 26770 / FZB42) (Bacillus amyloliquefaciens subsp. plantarum).